The chain runs to 316 residues: 4-diphosphocytidyl-2-C-methyl-D-erythritol kinase (316 aa).

Residue K32 is part of the active site. An ATP-binding site is contributed by 126–136 (PVGAGLGGGSA). The active site involves D168.

It belongs to the GHMP kinase family. IspE subfamily.

The enzyme catalyses 4-CDP-2-C-methyl-D-erythritol + ATP = 4-CDP-2-C-methyl-D-erythritol 2-phosphate + ADP + H(+). The protein operates within isoprenoid biosynthesis; isopentenyl diphosphate biosynthesis via DXP pathway; isopentenyl diphosphate from 1-deoxy-D-xylulose 5-phosphate: step 3/6. Functionally, catalyzes the phosphorylation of the position 2 hydroxy group of 4-diphosphocytidyl-2C-methyl-D-erythritol. This Bifidobacterium longum subsp. infantis (strain ATCC 15697 / DSM 20088 / JCM 1222 / NCTC 11817 / S12) protein is 4-diphosphocytidyl-2-C-methyl-D-erythritol kinase.